Consider the following 387-residue polypeptide: MSGGKKKSSFQITSVTTDYEGPGSPGASDSPVPPALAGPPPRLPNGDPNPDPGGRGTPRNGSPPPGAPASRFRVVKLPQGLGEPYRRGRWTCVDVYERDLEPPSFGRLLEGIRGASGGTGGRSLDSRLELASLGISTPIPQPGLSQGPTSWLRPPPTSPGPQARSFTGGLGQLAGPGKAKVETPPLSASPPQQRPPGPGTGDSAQTLPSLRVEVESGGSAAATPPLSRRRDGAVRLRMELVAPAETGKVPPTDSRPNSPALYFDASLVHKSPDPFGAAAAQSLSLARSMLAISGHLDSDDDSGSGSLVGIDNKIEQAMDLVKSHLMFAVREEVEVLKEQIRDLAERNAALEQENGLLRALASPEQLAQLPSSGLPRLGPSAPNGPSI.

Disordered stretches follow at residues 1-85 (MSGG…GEPY) and 135-232 (ISTP…RRDG). Positions 31–51 (PVPPALAGPPPRLPNGDPNPD) are enriched in pro residues. Residue threonine 57 is modified to Phosphothreonine. Phosphoserine is present on residues serine 62 and serine 165. Threonine 183 is subject to Phosphothreonine. Phosphoserine occurs at positions 187, 189, and 219. A Phosphothreonine modification is found at threonine 223. Phosphoserine is present on residues serine 254, serine 258, and serine 271. The segment at 336–357 (LKEQIRDLAERNAALEQENGLL) is leucine-zipper. Serine 362 carries the phosphoserine modification. Residues 368-387 (QLPSSGLPRLGPSAPNGPSI) are disordered.

The protein belongs to the TSC-22/Dip/Bun family. As to quaternary structure, forms a homodimer or heterodimer. Forms a heterodimer with TSC22D1 isoforms 1 and 2. Interacts with NRBP1. In terms of tissue distribution, expressed in the liver (at protein level). Expressed in Purkinje cells and proliferating cerebellar granular neurons (at protein level). Expressed in the cortex, medulla and papilla of the kidney.

The protein localises to the nucleus. The protein resides in the cytoplasm. It is found in the cell projection. Its subcellular location is the dendrite. It localises to the synapse. Functionally, binds DNA and acts as a transcriptional repressor. Involved in the regulation of systematic glucose homeostasis and insulin sensitivity, via transcriptional repression of downstream insulin signaling targets such as OBP2A/LCN13. Acts as a negative regulator of lipogenic gene expression in hepatocytes and thereby mediates the control of very low-density lipoprotein release. May play a role in neurite elongation and survival. The sequence is that of TSC22 domain family protein 4 from Mus musculus (Mouse).